A 105-amino-acid chain; its full sequence is Pyrimidine/purine nucleoside phosphorylase (105 aa).

The protein belongs to the nucleoside phosphorylase PpnP family.

It catalyses the reaction a purine D-ribonucleoside + phosphate = a purine nucleobase + alpha-D-ribose 1-phosphate. The enzyme catalyses adenosine + phosphate = alpha-D-ribose 1-phosphate + adenine. It carries out the reaction cytidine + phosphate = cytosine + alpha-D-ribose 1-phosphate. The catalysed reaction is guanosine + phosphate = alpha-D-ribose 1-phosphate + guanine. It catalyses the reaction inosine + phosphate = alpha-D-ribose 1-phosphate + hypoxanthine. The enzyme catalyses thymidine + phosphate = 2-deoxy-alpha-D-ribose 1-phosphate + thymine. It carries out the reaction uridine + phosphate = alpha-D-ribose 1-phosphate + uracil. The catalysed reaction is xanthosine + phosphate = alpha-D-ribose 1-phosphate + xanthine. Catalyzes the phosphorolysis of diverse nucleosides, yielding D-ribose 1-phosphate and the respective free bases. Can use uridine, adenosine, guanosine, cytidine, thymidine, inosine and xanthosine as substrates. Also catalyzes the reverse reactions. This Cupriavidus taiwanensis (strain DSM 17343 / BCRC 17206 / CCUG 44338 / CIP 107171 / LMG 19424 / R1) (Ralstonia taiwanensis (strain LMG 19424)) protein is Pyrimidine/purine nucleoside phosphorylase.